A 130-amino-acid polypeptide reads, in one-letter code: Small ribosomal subunit protein uS11 (130 aa).

This sequence belongs to the universal ribosomal protein uS11 family. As to quaternary structure, part of the 30S ribosomal subunit. Interacts with proteins S7 and S18. Binds to IF-3.

In terms of biological role, located on the platform of the 30S subunit, it bridges several disparate RNA helices of the 16S rRNA. Forms part of the Shine-Dalgarno cleft in the 70S ribosome. This chain is Small ribosomal subunit protein uS11, found in Nitrobacter hamburgensis (strain DSM 10229 / NCIMB 13809 / X14).